A 414-amino-acid chain; its full sequence is Ribulose bisphosphate carboxylase large chain (414 aa).

Substrate-binding residues include Asn-100 and Thr-150. Catalysis depends on Lys-152, which acts as the Proton acceptor. Position 154 (Lys-154) interacts with substrate. Mg(2+) is bound by residues Lys-178, Asp-180, and Glu-181. Residue Lys-178 is modified to N6-carboxylysine. Catalysis depends on His-271, which acts as the Proton acceptor. Residues Arg-272, His-304, and Ser-356 each contribute to the substrate site.

It belongs to the RuBisCO large chain family. Type I subfamily. As to quaternary structure, heterohexadecamer of 8 large chains and 8 small chains; disulfide-linked. The disulfide link is formed within the large subunit homodimers. It depends on Mg(2+) as a cofactor. The disulfide bond which can form in the large chain dimeric partners within the hexadecamer appears to be associated with oxidative stress and protein turnover.

The protein resides in the plastid. It localises to the chloroplast. The enzyme catalyses 2 (2R)-3-phosphoglycerate + 2 H(+) = D-ribulose 1,5-bisphosphate + CO2 + H2O. It catalyses the reaction D-ribulose 1,5-bisphosphate + O2 = 2-phosphoglycolate + (2R)-3-phosphoglycerate + 2 H(+). In terms of biological role, ruBisCO catalyzes two reactions: the carboxylation of D-ribulose 1,5-bisphosphate, the primary event in carbon dioxide fixation, as well as the oxidative fragmentation of the pentose substrate in the photorespiration process. Both reactions occur simultaneously and in competition at the same active site. In Blechnopsis orientalis (Fish fern), this protein is Ribulose bisphosphate carboxylase large chain (rbcL).